The sequence spans 136 residues: Small ribosomal subunit protein eS12 (136 aa).

It belongs to the eukaryotic ribosomal protein eS12 family.

This chain is Small ribosomal subunit protein eS12 (rps12), found in Dictyostelium discoideum (Social amoeba).